The chain runs to 209 residues: Small ribosomal subunit protein uS4 (209 aa).

The 67-residue stretch at 98-164 folds into the S4 RNA-binding domain; it reads RRLDNVVYRL…LPVKNAIELN (67 aa).

Belongs to the universal ribosomal protein uS4 family. In terms of assembly, part of the 30S ribosomal subunit. Contacts protein S5. The interaction surface between S4 and S5 is involved in control of translational fidelity.

One of the primary rRNA binding proteins, it binds directly to 16S rRNA where it nucleates assembly of the body of the 30S subunit. In terms of biological role, with S5 and S12 plays an important role in translational accuracy. This chain is Small ribosomal subunit protein uS4, found in Thermosipho africanus (strain TCF52B).